Reading from the N-terminus, the 305-residue chain is Ribose import binding protein RbsB (305 aa).

The N-terminal stretch at 1 to 18 (MKKAVSVILTLSLFLLTA) is a signal peptide. The N-palmitoyl cysteine moiety is linked to residue C19. C19 carries the S-diacylglycerol cysteine lipid modification.

This sequence belongs to the bacterial solute-binding protein 2 family. The complex is composed of an ATP-binding protein (RbsA), two transmembrane proteins (RbsC) and a solute-binding protein (RbsB). Interacts with FloT.

It is found in the cell membrane. The protein resides in the membrane raft. Part of the ABC transporter complex RbsABC involved in ribose import. Binds ribose. This Bacillus subtilis (strain 168) protein is Ribose import binding protein RbsB (rbsB).